The sequence spans 384 residues: Cyclin-J (384 aa).

Positions 15-143 (DIHQTLRYKE…LLETFEWNLC (129 aa)) constitute a Cyclin N-terminal domain.

It belongs to the cyclin family. Cyclin J subfamily.

The chain is Cyclin-J (ccnj) from Xenopus laevis (African clawed frog).